A 209-amino-acid chain; its full sequence is Ribosomal RNA large subunit methyltransferase E (209 aa).

S-adenosyl-L-methionine contacts are provided by Gly-63, Trp-65, Asp-83, Asp-99, and Asp-124. The Proton acceptor role is filled by Lys-164.

This sequence belongs to the class I-like SAM-binding methyltransferase superfamily. RNA methyltransferase RlmE family.

Its subcellular location is the cytoplasm. It carries out the reaction uridine(2552) in 23S rRNA + S-adenosyl-L-methionine = 2'-O-methyluridine(2552) in 23S rRNA + S-adenosyl-L-homocysteine + H(+). Specifically methylates the uridine in position 2552 of 23S rRNA at the 2'-O position of the ribose in the fully assembled 50S ribosomal subunit. The sequence is that of Ribosomal RNA large subunit methyltransferase E from Shewanella sp. (strain ANA-3).